The primary structure comprises 283 residues: Putative aquaporin NIP4-1 (283 aa).

At methionine 1 the chain carries N-acetylmethionine. A run of 2 helical transmembrane segments spans residues leucine 45–valine 65 and glycine 70–isoleucine 90. The NPA 1 motif lies at asparagine 102–alanine 104. The next 3 membrane-spanning stretches (helical) occupy residues leucine 122–phenylalanine 142, alanine 161–threonine 181, and leucine 189–serine 209. Residues asparagine 214–alanine 216 carry the NPA 2 motif. A helical transmembrane segment spans residues isoleucine 231–leucine 251. Serine 267 is modified (phosphoserine).

Belongs to the MIP/aquaporin (TC 1.A.8) family. NIP (TC 1.A.8.12) subfamily.

The protein resides in the membrane. In terms of biological role, potential aquaporin, which may facilitate the transport of water and small neutral solutes across cell membranes. In Arabidopsis thaliana (Mouse-ear cress), this protein is Putative aquaporin NIP4-1 (NIP4-1).